A 256-amino-acid chain; its full sequence is Small ribosomal subunit protein eS1 (256 aa).

The segment covering 1–18 has biased composition (basic residues); it reads MAVGKNKRLSKGKKGIKK. The disordered stretch occupies residues 1–20; the sequence is MAVGKNKRLSKGKKGIKKRT. A2 is modified (N-acetylalanine; partial).

Belongs to the eukaryotic ribosomal protein eS1 family. Component of the small ribosomal subunit. Mature ribosomes consist of a small (40S) and a large (60S) subunit. The 40S subunit contains about 33 different proteins and 1 molecule of RNA (18S). The 60S subunit contains about 49 different proteins and 3 molecules of RNA (25S, 5.8S and 5S).

The protein resides in the cytoplasm. In Emericella nidulans (strain FGSC A4 / ATCC 38163 / CBS 112.46 / NRRL 194 / M139) (Aspergillus nidulans), this protein is Small ribosomal subunit protein eS1 (rps1).